The primary structure comprises 141 residues: Hemoglobin subunit alpha-2 (141 aa).

The Globin domain occupies V1 to R141. Residue H59 coordinates O2. Residue H88 participates in heme b binding.

It belongs to the globin family. As to quaternary structure, heterotetramer of two alpha chains and two beta chains. Red blood cells.

Functionally, involved in oxygen transport from the lung to the various peripheral tissues. The polypeptide is Hemoglobin subunit alpha-2 (Torpedo marmorata (Marbled electric ray)).